Consider the following 87-residue polypeptide: U3-theraphotoxin-Hhn1c (87 aa).

Positions 1-24 (MVNMKASMFLTFAGLVLLFVVCHA) are cleaved as a signal peptide. Residues 25–52 (SESEEKEFPKEMLSSIFAVDDDFKQEER) constitute a propeptide that is removed on maturation. Disulfide bonds link Cys-54-Cys-67, Cys-61-Cys-72, and Cys-66-Cys-79.

Belongs to the neurotoxin 10 (Hwtx-1) family. 51 (Hntx-8) subfamily. Hntx-8 sub-subfamily. As to expression, expressed by the venom gland.

It localises to the secreted. Its function is as follows. Ion channel inhibitor. The sequence is that of U3-theraphotoxin-Hhn1c from Cyriopagopus hainanus (Chinese bird spider).